The following is a 227-amino-acid chain: Prolactin-4A1 (227 aa).

The first 31 residues, 1-31 (MHLSLTPQWSSWTVLLLLVSNLLLWENTASA), serve as a signal peptide directing secretion. 2 disulfides stabilise this stretch: cysteine 87/cysteine 203 and cysteine 220/cysteine 227. Asparagine 175 carries N-linked (GlcNAc...) asparagine glycosylation.

Belongs to the somatotropin/prolactin family. As to expression, expressed specifically in placenta. Expressed in both trophoblast giant cells and spongiotrophoblast cells.

It is found in the secreted. The polypeptide is Prolactin-4A1 (Prl4a1) (Mus musculus (Mouse)).